The following is a 1024-amino-acid chain: Multidrug resistance protein MdtC (1024 aa).

12 helical membrane-spanning segments follow: residues 12–32 (VATT…FSLL), 333–353 (EVER…FIFL), 360–380 (LIPA…MYLC), 387–407 (LSLM…IVVL), 435–455 (VLSM…MAGL), 469–489 (VAIG…CAWL), 528–548 (WVMV…ISIP), 853–873 (LWLI…LYES), 875–895 (VHPL…LLAL), 897–917 (LFDA…IGIV), 953–973 (PIIM…LSSG), and 984–1004 (ITIV…TPVI).

Belongs to the resistance-nodulation-cell division (RND) (TC 2.A.6) family. MdtC subfamily. In terms of assembly, part of a tripartite efflux system composed of MdtA, MdtB and MdtC. MdtC forms a heteromultimer with MdtB.

The protein resides in the cell inner membrane. This is Multidrug resistance protein MdtC from Yersinia pseudotuberculosis serotype O:1b (strain IP 31758).